The primary structure comprises 463 residues: FAD-dependent monooxygenase nodM (463 aa).

A helical transmembrane segment spans residues 5 to 25 (EFKVIIVGGSLAGLTLAHCLL). Residues Glu-35, Gly-49, Arg-108, Asp-305, and Ala-318 each coordinate FAD. A helical membrane pass occupies residues 438–458 (ILLGFTGVFTSALAMVVLLHI).

The protein belongs to the paxM FAD-dependent monooxygenase family. It depends on FAD as a cofactor.

The protein localises to the membrane. It functions in the pathway secondary metabolite biosynthesis. Functionally, FAD-dependent monooxygenase; part of the gene cluster that mediates the biosynthesis of the indole diterpenes nodulisporic acids (NA). Nodulisporic acid A (NAA) and its chemically modified derivatives are of particular significance because of their highly potent insecticidal activity against blood-feeding arthropods and lack of observable adverse effects on mammals, in particular the tremogenicity associated with the paspaline-derived IDTs is not observed. The geranylgeranyl diphosphate (GGPP) synthase ggs1, localized outside of the cluster, is proposed to catalyze the first step in nodulisporic acid biosynthesis via conversion of farnesyl pyrophosphate and isopentyl pyrophosphate into geranylgeranyl pyrophosphate (GGPP). Condensation of indole-3-glycerol phosphate with GGPP by the prenyl transferase nodC then forms 3-geranylgeranylindole (3-GGI). Epoxidation by the FAD-dependent monooxygenase nodM leads to a single-epoxidized-GGI that is substrate of the terpene cyclase nodB for cyclization to yield emindole SB. The terminal methyl carbon, C28, of emindole SB is then oxidized by the cytochrome P450 monooxygenase nodW to produce nodulisporic acid F (NAF), the pentacyclic core of NAA. NAF is converted to nodulisporic acid E (NAE) via prenylation. This step is probably performed by one of the indole diterpene prenyltransferases nodD1 or nodD2. Several oxidation steps performed by the FAD-linked oxidoreductase nodO and one of the cytochrome P450 monooxygenase nodR, nodX or nodZ further convert NAE to nodulisporic acid D (NAD). NAD is substrate of cytochrome P450 monooxygenase nodJ to produce the precursor of nodulisporic acid C (NAC), converted to NAC by one of the indole diterpene prenyltransferases nodD1 or nodD2. The FAD-dependent monooxygenase nodY2 then oxidizes NAC to nodulisporic acid B (NAB). Finally NAB is converted to NAA by one of the cytochrome P450 monooxygenases nodR, nodX or nodZ. The chain is FAD-dependent monooxygenase nodM from Hypoxylon pulicicidum.